Here is a 437-residue protein sequence, read N- to C-terminus: Leucine-rich repeat flightless-interacting protein 2 (437 aa).

S18 bears the Phosphoserine mark. Residues 22 to 49 adopt a coiled-coil conformation; that stretch reads EALSNIAREAEARLAAKRAARAEARDIR. A compositionally biased stretch (basic and acidic residues) spans 33–62; the sequence is ARLAAKRAARAEARDIRMRELERQQRESSS. Residues 33–152 form a disordered region; the sequence is ARLAAKRAAR…DTSLSELRES (120 aa). Residues 63 to 74 show a composition bias toward polar residues; the sequence is KDITGTHWSRAS. Residues 77–105 are compositionally biased toward basic and acidic residues; that stretch reads KRRDMMYDSIKDRSSRVSSLLDEKSDKQY. Residues 110 to 139 are compositionally biased toward polar residues; the sequence is TRPSSRNSASATTPLSGNSSRRGSGDTSSL. Phosphoserine is present on residues S114, S117, S125, S129, and S133. The residue at position 136 (T136) is a Phosphothreonine. Residues S137 and S138 each carry the phosphoserine modification. 2 coiled-coil regions span residues 143 to 239 and 282 to 430; these read DTSL…LIEK and LDVR…KANR.

The protein belongs to the LRRFIP family. As to quaternary structure, interacts with DVL3 and FLII. Weakly interacts with MYD88 in resting cells. Following LPS-stimulation, the interaction with MYD88 is rapidly enhanced; the complex gradually dissociates to basal levels after 6 hours of stimulation. Interaction with MYD88 is regulated by LPS-induced phosphorylation. In the presence of LPS, competes with FLII for MYD88-binding.

Its function is as follows. May function as activator of the canonical Wnt signaling pathway, in association with DVL3, upstream of CTNNB1/beta-catenin. Positively regulates Toll-like receptor (TLR) signaling in response to agonist probably by competing with the negative FLII regulator for MYD88-binding. The chain is Leucine-rich repeat flightless-interacting protein 2 (Lrrfip2) from Rattus norvegicus (Rat).